A 180-amino-acid polypeptide reads, in one-letter code: ATP-dependent protease subunit HslV (180 aa).

Residue Thr9 is part of the active site. Na(+) is bound by residues Ala164, Cys167, and Thr170.

The protein belongs to the peptidase T1B family. HslV subfamily. A double ring-shaped homohexamer of HslV is capped on each side by a ring-shaped HslU homohexamer. The assembly of the HslU/HslV complex is dependent on binding of ATP.

The protein resides in the cytoplasm. It catalyses the reaction ATP-dependent cleavage of peptide bonds with broad specificity.. Its activity is regulated as follows. Allosterically activated by HslU binding. In terms of biological role, protease subunit of a proteasome-like degradation complex believed to be a general protein degrading machinery. This is ATP-dependent protease subunit HslV from Leptospira interrogans serogroup Icterohaemorrhagiae serovar Lai (strain 56601).